A 444-amino-acid polypeptide reads, in one-letter code: Elongation factor 1-alpha (444 aa).

The tr-type G domain maps to 15 to 236 (KPHLNLAVIG…ALDTFQPPPR (222 aa)). Residues 24-31 (GHVDNGKS) form a G1 region. 24-31 (GHVDNGKS) contributes to the GTP binding site. S31 is a Mg(2+) binding site. Positions 80 to 84 (GVTIE) are G2. The interval 101 to 104 (DLPG) is G3. GTP-binding positions include 101-105 (DLPGH) and 163-166 (NKMD). Residues 163–166 (NKMD) form a G4 region. The segment at 202–204 (SAI) is G5.

This sequence belongs to the TRAFAC class translation factor GTPase superfamily. Classic translation factor GTPase family. EF-Tu/EF-1A subfamily.

It localises to the cytoplasm. The enzyme catalyses GTP + H2O = GDP + phosphate + H(+). In terms of biological role, GTP hydrolase that promotes the GTP-dependent binding of aminoacyl-tRNA to the A-site of ribosomes during protein biosynthesis. This Pyrobaculum islandicum (strain DSM 4184 / JCM 9189 / GEO3) protein is Elongation factor 1-alpha.